Consider the following 332-residue polypeptide: Holliday junction branch migration complex subunit RuvB (332 aa).

A large ATPase domain (RuvB-L) region spans residues 1-182; it reads MKLNKNSELK…FGLILKLNYY (182 aa). Residues L21, R22, G63, K66, T67, T68, 129-131, R172, Y182, and R219 each bind ATP; that span reads EDY. T67 is a Mg(2+) binding site. The segment at 183–253 is small ATPAse domain (RuvB-S); sequence SEDELELIIK…ISEIALEKLT (71 aa). Residues 256 to 332 are head domain (RuvB-H); sequence KNGLDDADYT…FKLFKNDKIK (77 aa). DNA is bound by residues R311 and R316.

This sequence belongs to the RuvB family. As to quaternary structure, homohexamer. Forms an RuvA(8)-RuvB(12)-Holliday junction (HJ) complex. HJ DNA is sandwiched between 2 RuvA tetramers; dsDNA enters through RuvA and exits via RuvB. An RuvB hexamer assembles on each DNA strand where it exits the tetramer. Each RuvB hexamer is contacted by two RuvA subunits (via domain III) on 2 adjacent RuvB subunits; this complex drives branch migration. In the full resolvosome a probable DNA-RuvA(4)-RuvB(12)-RuvC(2) complex forms which resolves the HJ.

The protein localises to the cytoplasm. The enzyme catalyses ATP + H2O = ADP + phosphate + H(+). The RuvA-RuvB-RuvC complex processes Holliday junction (HJ) DNA during genetic recombination and DNA repair, while the RuvA-RuvB complex plays an important role in the rescue of blocked DNA replication forks via replication fork reversal (RFR). RuvA specifically binds to HJ cruciform DNA, conferring on it an open structure. The RuvB hexamer acts as an ATP-dependent pump, pulling dsDNA into and through the RuvAB complex. RuvB forms 2 homohexamers on either side of HJ DNA bound by 1 or 2 RuvA tetramers; 4 subunits per hexamer contact DNA at a time. Coordinated motions by a converter formed by DNA-disengaged RuvB subunits stimulates ATP hydrolysis and nucleotide exchange. Immobilization of the converter enables RuvB to convert the ATP-contained energy into a lever motion, pulling 2 nucleotides of DNA out of the RuvA tetramer per ATP hydrolyzed, thus driving DNA branch migration. The RuvB motors rotate together with the DNA substrate, which together with the progressing nucleotide cycle form the mechanistic basis for DNA recombination by continuous HJ branch migration. Branch migration allows RuvC to scan DNA until it finds its consensus sequence, where it cleaves and resolves cruciform DNA. The sequence is that of Holliday junction branch migration complex subunit RuvB from Phytoplasma mali (strain AT).